The chain runs to 1070 residues: DNA-directed RNA polymerase subunit beta (1070 aa).

It belongs to the RNA polymerase beta chain family. In plastids the minimal PEP RNA polymerase catalytic core is composed of four subunits: alpha, beta, beta', and beta''. When a (nuclear-encoded) sigma factor is associated with the core the holoenzyme is formed, which can initiate transcription.

Its subcellular location is the plastid. It localises to the chloroplast. The enzyme catalyses RNA(n) + a ribonucleoside 5'-triphosphate = RNA(n+1) + diphosphate. In terms of biological role, DNA-dependent RNA polymerase catalyzes the transcription of DNA into RNA using the four ribonucleoside triphosphates as substrates. This chain is DNA-directed RNA polymerase subunit beta, found in Illicium oligandrum (Star anise).